Here is a 569-residue protein sequence, read N- to C-terminus: Mitogen-activated protein kinase 7 (569 aa).

A Protein kinase domain is found at 13–304 (YKIQEIVGKG…AEEALADPYF (292 aa)). Residues 19–27 (VGKGSYGVV) and Lys-42 each bind ATP. Asp-139 serves as the catalytic Proton acceptor. Phosphothreonine is present on Thr-175. Positions 175–177 (TDY) match the TXY motif. Tyr-177 is modified (phosphotyrosine). Residues 401 to 420 (TTVHSTSIPPNEGLDATSQV) form a disordered region.

This sequence belongs to the protein kinase superfamily. CMGC Ser/Thr protein kinase family. MAP kinase subfamily. Post-translationally, dually phosphorylated on Thr-175 and Tyr-177, which activates the enzyme.

It catalyses the reaction L-seryl-[protein] + ATP = O-phospho-L-seryl-[protein] + ADP + H(+). The catalysed reaction is L-threonyl-[protein] + ATP = O-phospho-L-threonyl-[protein] + ADP + H(+). With respect to regulation, activated by threonine and tyrosine phosphorylation. The protein is Mitogen-activated protein kinase 7 (MPK7) of Oryza sativa subsp. japonica (Rice).